The chain runs to 923 residues: Protein prickle (923 aa).

The interval 1–196 is disordered; sequence MSYPYQKSHH…HPFHSPASAA (196 aa). The segment covering 11-34 has biased composition (low complexity); that stretch reads QTQQPQQNGHPQHQLMLQQQQQAD. The segment covering 37 to 49 has biased composition (basic residues); it reads PHHHHHHHVHHAT. 2 stretches are compositionally biased toward low complexity: residues 59 to 73 and 106 to 118; these read RSPLRSPQSPPLYSG and MPGMMPGQQPPGM. A compositionally biased stretch (gly residues) spans 122–134; sequence LGGGGGGGGGGSA. Low complexity-rich tracts occupy residues 152–169 and 184–196; these read STVTNTSSTATNAPSARS and SSHHPFHSPASAA. The PET domain maps to 275-383; the sequence is GGGHNYSQSD…TVKQITTTLI (109 aa). LIM zinc-binding domains are found at residues 382–446, 447–507, and 508–570; these read LICE…ETLK, PRCS…MFAE, and YCDY…GEPP. 2 disordered regions span residues 571–668 and 703–867; these read TPSD…LDLT and GPIA…SSAD. Gly residues predominate over residues 709–718; that stretch reads NGNGPTGGGP. Polar residues predominate over residues 738–748; the sequence is ESPSFSGTNSP. The span at 777 to 786 shows a compositional bias: basic and acidic residues; the sequence is HSIKEVRFEG. Residues 792–805 show a composition bias toward polar residues; sequence LPRTKSYCQRNGGQ. The span at 817–827 shows a compositional bias: acidic residues; the sequence is SDDDELAEDET. The segment covering 840-852 has biased composition (basic and acidic residues); that stretch reads QREQQRPVDDSDA. The span at 853 to 865 shows a compositional bias: low complexity; sequence RSVCSTCSSSSSS.

Belongs to the prickle / espinas / testin family. As to quaternary structure, interacts with dsh; PET and LIM domains interact with dsh DEP domain, in wing cells. Interacts with Vang in photoreceptor cells.

The protein localises to the cell membrane. In terms of biological role, acts in a planar cell polarity (PCP) complex; polarization along the apical/basal axis of epithelial cells. PCP signaling in the wing disk requires the receptor fz and the cytoplasmic proteins dsh and pk. These act in a feedback loop leading to activation of the jnk cascade and subsequent polarized arrangement of hairs and bristles. Dgo and pk compete with one another for dsh binding, thereby modulating fz dsh activity and ensuring tight control over fz PCP signaling. Vang, stan and pk function together to regulate the establishment of tissue polarity in the adult eye. This chain is Protein prickle, found in Anopheles gambiae (African malaria mosquito).